A 449-amino-acid polypeptide reads, in one-letter code: C4-dicarboxylate transport protein (449 aa).

The segment at 1–20 (MSALTESFGPVPSAKSKPPA) is disordered. Low complexity predominate over residues 10–20 (PVPSAKSKPPA). 8 helical membrane-spanning segments follow: residues 28–48 (LLYL…WLSP), 66–86 (LIKM…IAHI), 101–121 (LYFE…GNVV), 167–187 (GDIL…MTLG), 205–225 (FGVI…AMAF), 241–261 (LIAV…GLIA), 326–346 (IYMT…LTWT), and 370–390 (FITL…GMAI).

It belongs to the dicarboxylate/amino acid:cation symporter (DAACS) (TC 2.A.23) family.

The protein localises to the cell inner membrane. Its function is as follows. Responsible for the transport of dicarboxylates such as succinate, fumarate, and malate from the periplasm across the membrane. The sequence is that of C4-dicarboxylate transport protein from Rhodopseudomonas palustris (strain BisB18).